Reading from the N-terminus, the 230-residue chain is Small ribosomal subunit protein uS3 (230 aa).

Residues 39–107 (VRNYLRQKLA…PVHVNIEEIR (69 aa)) form the KH type-2 domain. The segment at 210 to 230 (SSKPEHESKQRKAGRRNAAAN) is disordered.

The protein belongs to the universal ribosomal protein uS3 family. As to quaternary structure, part of the 30S ribosomal subunit. Forms a tight complex with proteins S10 and S14.

Functionally, binds the lower part of the 30S subunit head. Binds mRNA in the 70S ribosome, positioning it for translation. In Neisseria meningitidis serogroup C (strain 053442), this protein is Small ribosomal subunit protein uS3.